We begin with the raw amino-acid sequence, 360 residues long: Phosphoserine aminotransferase (360 aa).

Arginine 41 lines the L-glutamate pocket. Pyridoxal 5'-phosphate contacts are provided by residues 75-76, tryptophan 101, threonine 152, aspartate 172, and glutamine 195; that span reads GR. The residue at position 196 (lysine 196) is an N6-(pyridoxal phosphate)lysine. A pyridoxal 5'-phosphate-binding site is contributed by 237-238; sequence NT.

This sequence belongs to the class-V pyridoxal-phosphate-dependent aminotransferase family. SerC subfamily. As to quaternary structure, homodimer. Pyridoxal 5'-phosphate is required as a cofactor.

It is found in the cytoplasm. The catalysed reaction is O-phospho-L-serine + 2-oxoglutarate = 3-phosphooxypyruvate + L-glutamate. It catalyses the reaction 4-(phosphooxy)-L-threonine + 2-oxoglutarate = (R)-3-hydroxy-2-oxo-4-phosphooxybutanoate + L-glutamate. It functions in the pathway amino-acid biosynthesis; L-serine biosynthesis; L-serine from 3-phospho-D-glycerate: step 2/3. It participates in cofactor biosynthesis; pyridoxine 5'-phosphate biosynthesis; pyridoxine 5'-phosphate from D-erythrose 4-phosphate: step 3/5. Its function is as follows. Catalyzes the reversible conversion of 3-phosphohydroxypyruvate to phosphoserine and of 3-hydroxy-2-oxo-4-phosphonooxybutanoate to phosphohydroxythreonine. The protein is Phosphoserine aminotransferase of Pseudoalteromonas translucida (strain TAC 125).